The primary structure comprises 404 residues: S-adenosylmethionine synthase (404 aa).

H18 is a binding site for ATP. D20 contacts Mg(2+). E46 serves as a coordination point for K(+). The L-methionine site is built by E59 and Q102. Residues 102 to 112 (QSPEIAQGVDH) form a flexible loop region. ATP contacts are provided by residues 178 to 180 (DGK), 249 to 250 (KF), D258, 264 to 265 (RK), A281, and K285. Position 258 (D258) interacts with L-methionine. K289 serves as a coordination point for L-methionine.

This sequence belongs to the AdoMet synthase family. In terms of assembly, homotetramer; dimer of dimers. The cofactor is Mg(2+). K(+) is required as a cofactor.

Its subcellular location is the cytoplasm. It carries out the reaction L-methionine + ATP + H2O = S-adenosyl-L-methionine + phosphate + diphosphate. Its pathway is amino-acid biosynthesis; S-adenosyl-L-methionine biosynthesis; S-adenosyl-L-methionine from L-methionine: step 1/1. Its function is as follows. Catalyzes the formation of S-adenosylmethionine (AdoMet) from methionine and ATP. The overall synthetic reaction is composed of two sequential steps, AdoMet formation and the subsequent tripolyphosphate hydrolysis which occurs prior to release of AdoMet from the enzyme. The chain is S-adenosylmethionine synthase from Rhodococcus opacus (strain B4).